A 492-amino-acid polypeptide reads, in one-letter code: N-succinylglutamate 5-semialdehyde dehydrogenase (492 aa).

An NAD(+)-binding site is contributed by 220-225; sequence GSASTG. Residues E243 and C277 contribute to the active site.

It belongs to the aldehyde dehydrogenase family. AstD subfamily.

It carries out the reaction N-succinyl-L-glutamate 5-semialdehyde + NAD(+) + H2O = N-succinyl-L-glutamate + NADH + 2 H(+). The protein operates within amino-acid degradation; L-arginine degradation via AST pathway; L-glutamate and succinate from L-arginine: step 4/5. Its function is as follows. Catalyzes the NAD-dependent reduction of succinylglutamate semialdehyde into succinylglutamate. The sequence is that of N-succinylglutamate 5-semialdehyde dehydrogenase from Salmonella paratyphi A (strain AKU_12601).